The following is a 242-amino-acid chain: Sugar fermentation stimulation protein homolog (242 aa).

It belongs to the SfsA family.

The protein is Sugar fermentation stimulation protein homolog of Nitratidesulfovibrio vulgaris (strain DP4) (Desulfovibrio vulgaris).